Here is a 97-residue protein sequence, read N- to C-terminus: MQFTIATVLSLLTITLAAPAAMERQVPYTPCSGLYGTAQCCATDVLGVADLDCANPPATLANATHFESTCAAIGQRARCCVLPILGQDILCQTPAGL.

The signal sequence occupies residues 1 to 17 (MQFTIATVLSLLTITLA). Intrachain disulfides connect Cys-31-Cys-79, Cys-40-Cys-70, Cys-41-Cys-53, and Cys-80-Cys-91. A glycan (N-linked (GlcNAc...) asparagine) is linked at Asn-62.

Belongs to the cerato-ulmin hydrophobin family. In terms of assembly, homotrimer. Further self-assembles to form highly ordered films at water-air interfaces through intermolecular interactions.

Its subcellular location is the secreted. The protein resides in the cell wall. Its function is as follows. Aerial growth, conidiation, and dispersal of filamentous fungi in the environment rely upon a capability of their secreting small amphipathic proteins called hydrophobins (HPBs) with low sequence identity. Class I can self-assemble into an outermost layer of rodlet bundles on aerial cell surfaces, conferring cellular hydrophobicity that supports fungal growth, development and dispersal; whereas Class II form highly ordered films at water-air interfaces through intermolecular interactions but contribute nothing to the rodlet structure. NC2 is a class II hydrophobin that has the potential to adsorb to the hydrophobic interface at the hydrophobic-hydrophilic interface at very high rate but the predicted self-assembly NC2 film possesses a lower flexural rigidity than other class II hydrophobins such as HFBII from Hypocrea jecorina (also known as Trichoderma reesei). The protein is Class II hydrophobin NC2 of Neurospora crassa (strain ATCC 24698 / 74-OR23-1A / CBS 708.71 / DSM 1257 / FGSC 987).